We begin with the raw amino-acid sequence, 288 residues long: Shikimate dehydrogenase (NADP(+)) (288 aa).

Shikimate-binding positions include 21–23 (SLS) and T68. Catalysis depends on K72, which acts as the Proton acceptor. E84 provides a ligand contact to NADP(+). N93 and D108 together coordinate shikimate. NADP(+)-binding positions include 132 to 136 (GNGGA) and L230. Y232 is a binding site for shikimate. Residue G253 coordinates NADP(+).

This sequence belongs to the shikimate dehydrogenase family. Homodimer.

The enzyme catalyses shikimate + NADP(+) = 3-dehydroshikimate + NADPH + H(+). It functions in the pathway metabolic intermediate biosynthesis; chorismate biosynthesis; chorismate from D-erythrose 4-phosphate and phosphoenolpyruvate: step 4/7. Involved in the biosynthesis of the chorismate, which leads to the biosynthesis of aromatic amino acids. Catalyzes the reversible NADPH linked reduction of 3-dehydroshikimate (DHSA) to yield shikimate (SA). In Gloeothece citriformis (strain PCC 7424) (Cyanothece sp. (strain PCC 7424)), this protein is Shikimate dehydrogenase (NADP(+)).